A 119-amino-acid chain; its full sequence is Dihydroneopterin aldolase (119 aa).

Residues Glu21, Tyr53, and 72-73 (ID) each bind substrate. Lys99 serves as the catalytic Proton donor/acceptor.

Belongs to the DHNA family.

It catalyses the reaction 7,8-dihydroneopterin = 6-hydroxymethyl-7,8-dihydropterin + glycolaldehyde. Its pathway is cofactor biosynthesis; tetrahydrofolate biosynthesis; 2-amino-4-hydroxy-6-hydroxymethyl-7,8-dihydropteridine diphosphate from 7,8-dihydroneopterin triphosphate: step 3/4. Catalyzes the conversion of 7,8-dihydroneopterin to 6-hydroxymethyl-7,8-dihydropterin. This is Dihydroneopterin aldolase (folB) from Streptococcus pyogenes.